We begin with the raw amino-acid sequence, 138 residues long: Cysteine desulfuration protein SufE (138 aa).

The active-site Cysteine persulfide intermediate is the C51.

The protein belongs to the SufE family. As to quaternary structure, homodimer. Interacts with SufS.

The protein localises to the cytoplasm. It participates in cofactor biosynthesis; iron-sulfur cluster biosynthesis. Participates in cysteine desulfuration mediated by SufS. Cysteine desulfuration mobilizes sulfur from L-cysteine to yield L-alanine and constitutes an essential step in sulfur metabolism for biosynthesis of a variety of sulfur-containing biomolecules. Functions as a sulfur acceptor for SufS, by mediating the direct transfer of the sulfur atom from the S-sulfanylcysteine of SufS, an intermediate product of cysteine desulfuration process. This Escherichia coli O81 (strain ED1a) protein is Cysteine desulfuration protein SufE.